Consider the following 4134-residue polypeptide: DNA-dependent protein kinase catalytic subunit (4134 aa).

HEAT repeat units follow at residues 900–937 (VIYL…VAYM), 1000–1036 (QDTV…LKWS), and 1050–1085 (ANTK…YREF). TPR repeat units follow at residues 1265 to 1305 (YNTF…HDIH) and 1722 to 1755 (PMSS…SQSP). Serine 2055 is modified (phosphoserine; by autocatalysis). One copy of the TPR 3 repeat lies at 2207-2240 (DEILANRLLEFLMKNAFHQKRAVFRHNLEIIKTV). Threonine 2609 bears the Phosphothreonine; by autocatalysis mark. The segment covering 2611–2629 (ASQSTNRNSSQERSLSISG) has biased composition (polar residues). A disordered region spans residues 2611–2631 (ASQSTNRNSSQERSLSISGSV). A Phosphoserine; by autocatalysis modification is found at serine 2612. A phosphothreonine; by autocatalysis mark is found at threonine 2638 and threonine 2647. Residues 2880–3545 (NVSTSCLASL…IYPFTISSES (666 aa)) enclose the FAT domain. A PI3K/PI4K catalytic domain is found at 3728–4059 (FDERIMVLES…VSYVKRKLTG (332 aa)). Residues 3734–3740 (VLESLRK) form a G-loop region. Residues 3925–3933 (GIGDRHLSN) form a catalytic loop region. Positions 3945–3970 (GIDFGHAFGSATQFLPVPELMPFRLT) are activation loop. The region spanning 4102 to 4134 (DRLSEETQVRCLIDQATDPNLLGRVWEGWEPWM) is the FATC domain.

Belongs to the PI3/PI4-kinase family. In terms of assembly, DNA-PK is a heterotrimer of PRKDC and the Ku dimer (composed of XRCC6/Ku70 and XRCC5/Ku86). Component of the core long-range non-homologous end joining (NHEJ) complex (also named DNA-PK complex) composed of PRKDC, LIG4, XRCC4, XRCC6/Ku70, XRCC5/Ku86 and NHEJ1/XLF. Additional component of the NHEJ complex includes PAXX. Following autophosphorylation, PRKDC dissociates from DNA. Autophosphorylated at two clusters, the T2609 cluster and the S2056 cluster. Autophosphorylated on Ser-2055, Thr-2609, Thr-2638 and Thr-2647. Ser-2055 and Thr-2609 are DNA damage-inducible phosphorylation sites (inducible with ionizing radiation, IR) dephosphorylated by PPP5C. Autophosphorylation induces a conformational change that leads to remodeling of the DNA-PK complex, requisite for efficient end processing and DNA repair. Autophosphorylation in trans within DNA-PK complexes loaded on DNA ends leads to the dissociation of PRKDC from DNA and the transition into the short-range NHEJ complex. Autophosphorylation of the T2609 cluster is required for hematopoietic development and protein synthesis in erythrocytes precursors.

Its subcellular location is the nucleus. It localises to the nucleolus. The catalysed reaction is L-seryl-[protein] + ATP = O-phospho-L-seryl-[protein] + ADP + H(+). The enzyme catalyses L-threonyl-[protein] + ATP = O-phospho-L-threonyl-[protein] + ADP + H(+). Its function is as follows. Serine/threonine-protein kinase that acts as a molecular sensor for DNA damage. Involved in DNA nonhomologous end joining (NHEJ) required for double-strand break (DSB) repair and V(D)J recombination. Must be bound to DNA to express its catalytic properties. Promotes processing of hairpin DNA structures in V(D)J recombination by activation of the hairpin endonuclease artemis (DCLRE1C). Recruited by XRCC5 and XRCC6 to DNA ends and is required to (1) protect and align broken ends of DNA, thereby preventing their degradation, (2) and sequester the DSB for repair by NHEJ. Acts as a scaffold protein to aid the localization of DNA repair proteins to the site of damage. The assembly of the DNA-PK complex at DNA ends is also required for the NHEJ ligation step. Found at the ends of chromosomes, suggesting a further role in the maintenance of telomeric stability and the prevention of chromosomal end fusion. As part of the DNA-PK complex, involved in the early steps of ribosome assembly by promoting the processing of precursor rRNA into mature 18S rRNA in the small-subunit processome. Recognizes the substrate consensus sequence [ST]-Q. Phosphorylates 'Ser-139' of histone variant H2AX, thereby regulating DNA damage response mechanism. The polypeptide is DNA-dependent protein kinase catalytic subunit (PRKDC) (Gallus gallus (Chicken)).